The sequence spans 84 residues: U21-theraphotoxin-Cg1c (84 aa).

A signal peptide spans 1-21; that stretch reads MKVSVLITLAVLGVMFLLTSA. Residues 22-47 constitute a propeptide that is removed on maturation; the sequence is EERGSDQMDSPAWLKSMERIFQSEER. 3 disulfide bridges follow: cysteine 49/cysteine 63, cysteine 56/cysteine 68, and cysteine 62/cysteine 76.

Belongs to the neurotoxin 10 (Hwtx-1) family. 05 (F4a) subfamily. Expressed by the venom gland.

It is found in the secreted. In terms of biological role, probable ion channel inhibitor. In Chilobrachys guangxiensis (Chinese earth tiger tarantula), this protein is U21-theraphotoxin-Cg1c.